Reading from the N-terminus, the 223-residue chain is MQLERLQKKLSYQFTNLDYLLQALTHRSAGAKNNERLEFLGDSILNFAIGKALFEKFPKANEGELSRMRATLVREQTLAILARQFGLGEYMRLGAGELKSGGYRRESILSDCVEAIIAAIYLDAGMDKAIEQVHLWYQDLLAEMKPGDAQKDPKTRLQEFLQGRKLPLPTYEVLDIKGEAHNQTFKVTCKIEMLEEIFIGIGTSRRKAEQNAAEQVLAKLTTK.

The RNase III domain maps to 3–125 (LERLQKKLSY…IIAAIYLDAG (123 aa)). Mg(2+) is bound at residue E38. The active site involves D42. Residues D111 and E114 each contribute to the Mg(2+) site. Residue E114 is part of the active site. The DRBM domain occupies 152 to 222 (DPKTRLQEFL…AEQVLAKLTT (71 aa)).

This sequence belongs to the ribonuclease III family. As to quaternary structure, homodimer. The cofactor is Mg(2+).

It localises to the cytoplasm. It catalyses the reaction Endonucleolytic cleavage to 5'-phosphomonoester.. Digests double-stranded RNA. Involved in the processing of primary rRNA transcript to yield the immediate precursors to the large and small rRNAs (23S and 16S). Processes some mRNAs, and tRNAs when they are encoded in the rRNA operon. Processes pre-crRNA and tracrRNA of type II CRISPR loci if present in the organism. This is Ribonuclease 3 from Actinobacillus pleuropneumoniae serotype 5b (strain L20).